The following is a 555-amino-acid chain: Potassium-transporting ATPase potassium-binding subunit (555 aa).

10 helical membrane-spanning segments follow: residues 2–22, 60–80, 130–150, 173–193, 246–266, 278–298, 374–394, 412–432, 483–503, and 525–545; these read IWVAVVITMLLFILVAKPTGI, QYALSLVLLNGFMIVVVYFIF, IGITFLMFAAPATTLALVMAF, VFLPIAFVTALVFVALGVPQT, MSNILQMMLMMLLPTALPFTY, ILFVSLFMVFLLGFITITTSE, AGFVNIITYAIIAVFISGLMV, LIAVTILFHPLLILGFSALAL, LVMFLGRYFSLVTMLAVAASL, and GIFIGTIVIVGALTFFPMLVL.

Belongs to the KdpA family. In terms of assembly, the system is composed of three essential subunits: KdpA, KdpB and KdpC.

The protein resides in the cell membrane. In terms of biological role, part of the high-affinity ATP-driven potassium transport (or Kdp) system, which catalyzes the hydrolysis of ATP coupled with the electrogenic transport of potassium into the cytoplasm. This subunit binds the extracellular potassium ions and delivers the ions to the membrane domain of KdpB through an intramembrane tunnel. The protein is Potassium-transporting ATPase potassium-binding subunit of Bacillus thuringiensis subsp. konkukian (strain 97-27).